We begin with the raw amino-acid sequence, 254 residues long: Thiazole synthase (254 aa).

The active-site Schiff-base intermediate with DXP is the Lys-96. 1-deoxy-D-xylulose 5-phosphate is bound by residues Gly-157, 183 to 184 (AG), and 205 to 206 (NT).

The protein belongs to the ThiG family. In terms of assembly, homotetramer. Forms heterodimers with either ThiH or ThiS.

The protein localises to the cytoplasm. It carries out the reaction [ThiS sulfur-carrier protein]-C-terminal-Gly-aminoethanethioate + 2-iminoacetate + 1-deoxy-D-xylulose 5-phosphate = [ThiS sulfur-carrier protein]-C-terminal Gly-Gly + 2-[(2R,5Z)-2-carboxy-4-methylthiazol-5(2H)-ylidene]ethyl phosphate + 2 H2O + H(+). It participates in cofactor biosynthesis; thiamine diphosphate biosynthesis. Catalyzes the rearrangement of 1-deoxy-D-xylulose 5-phosphate (DXP) to produce the thiazole phosphate moiety of thiamine. Sulfur is provided by the thiocarboxylate moiety of the carrier protein ThiS. In vitro, sulfur can be provided by H(2)S. This is Thiazole synthase from Clostridium perfringens (strain 13 / Type A).